Reading from the N-terminus, the 251-residue chain is Ditrans,polycis-undecaprenyl-diphosphate synthase ((2E,6E)-farnesyl-diphosphate specific) (251 aa).

Asp21 is an active-site residue. Asp21 is a Mg(2+) binding site. Residues 22–25 (GNNR), Trp26, His38, and 66–68 (SSE) contribute to the substrate site. The active-site Proton acceptor is the Asn69. Substrate-binding positions include Trp70, Arg72, Arg189, and 195 to 197 (RIS). Glu208 is a Mg(2+) binding site.

Belongs to the UPP synthase family. In terms of assembly, homodimer. Mg(2+) serves as cofactor.

The enzyme catalyses 8 isopentenyl diphosphate + (2E,6E)-farnesyl diphosphate = di-trans,octa-cis-undecaprenyl diphosphate + 8 diphosphate. Catalyzes the sequential condensation of isopentenyl diphosphate (IPP) with (2E,6E)-farnesyl diphosphate (E,E-FPP) to yield (2Z,6Z,10Z,14Z,18Z,22Z,26Z,30Z,34E,38E)-undecaprenyl diphosphate (di-trans,octa-cis-UPP). UPP is the precursor of glycosyl carrier lipid in the biosynthesis of bacterial cell wall polysaccharide components such as peptidoglycan and lipopolysaccharide. This chain is Ditrans,polycis-undecaprenyl-diphosphate synthase ((2E,6E)-farnesyl-diphosphate specific), found in Pseudomonas putida (strain ATCC 47054 / DSM 6125 / CFBP 8728 / NCIMB 11950 / KT2440).